The following is a 340-amino-acid chain: Glycerol-3-phosphate dehydrogenase [NAD(P)+] (340 aa).

NADPH-binding residues include Ser13, Tyr14, and Lys108. Residues Lys108, Gly137, and Thr139 each contribute to the sn-glycerol 3-phosphate site. An NADPH-binding site is contributed by Ala141. The sn-glycerol 3-phosphate site is built by Lys193, Asp246, Ser256, Arg257, and Asn258. The active-site Proton acceptor is Lys193. Arg257 contacts NADPH. Residues Ile281 and Glu283 each contribute to the NADPH site.

The protein belongs to the NAD-dependent glycerol-3-phosphate dehydrogenase family.

It localises to the cytoplasm. It catalyses the reaction sn-glycerol 3-phosphate + NAD(+) = dihydroxyacetone phosphate + NADH + H(+). The catalysed reaction is sn-glycerol 3-phosphate + NADP(+) = dihydroxyacetone phosphate + NADPH + H(+). It functions in the pathway membrane lipid metabolism; glycerophospholipid metabolism. In terms of biological role, catalyzes the reduction of the glycolytic intermediate dihydroxyacetone phosphate (DHAP) to sn-glycerol 3-phosphate (G3P), the key precursor for phospholipid synthesis. The polypeptide is Glycerol-3-phosphate dehydrogenase [NAD(P)+] (Bartonella quintana (strain Toulouse) (Rochalimaea quintana)).